Reading from the N-terminus, the 140-residue chain is uncharacterized protein (140 aa).

It localises to the mitochondrion. This is an uncharacterized protein from Homo sapiens (Human).